The primary structure comprises 304 residues: Porphobilinogen deaminase (304 aa).

Cysteine 239 carries the post-translational modification S-(dipyrrolylmethanemethyl)cysteine.

This sequence belongs to the HMBS family. In terms of assembly, monomer. Requires dipyrromethane as cofactor.

It carries out the reaction 4 porphobilinogen + H2O = hydroxymethylbilane + 4 NH4(+). Its pathway is porphyrin-containing compound metabolism; protoporphyrin-IX biosynthesis; coproporphyrinogen-III from 5-aminolevulinate: step 2/4. Tetrapolymerization of the monopyrrole PBG into the hydroxymethylbilane pre-uroporphyrinogen in several discrete steps. The protein is Porphobilinogen deaminase of Brucella ovis (strain ATCC 25840 / 63/290 / NCTC 10512).